Here is a 177-residue protein sequence, read N- to C-terminus: Peptide methionine sulfoxide reductase MsrA (177 aa).

Cysteine 10 is a catalytic residue.

It belongs to the MsrA Met sulfoxide reductase family.

It carries out the reaction L-methionyl-[protein] + [thioredoxin]-disulfide + H2O = L-methionyl-(S)-S-oxide-[protein] + [thioredoxin]-dithiol. It catalyses the reaction [thioredoxin]-disulfide + L-methionine + H2O = L-methionine (S)-S-oxide + [thioredoxin]-dithiol. Its function is as follows. Has an important function as a repair enzyme for proteins that have been inactivated by oxidation. Catalyzes the reversible oxidation-reduction of methionine sulfoxide in proteins to methionine. The sequence is that of Peptide methionine sulfoxide reductase MsrA from Saccharolobus solfataricus (strain ATCC 35092 / DSM 1617 / JCM 11322 / P2) (Sulfolobus solfataricus).